The following is a 258-amino-acid chain: Snake venom serine protease BPA (258 aa).

The N-terminal stretch at 1-18 is a signal peptide; it reads MVLIRVIANLLILQLSNA. Residues 19–24 constitute a propeptide that is removed on maturation; it reads QKSSEL. The 225-residue stretch at 25-249 folds into the Peptidase S1 domain; sequence VIGGDECNIT…YLPWIQSIIA (225 aa). 6 disulfides stabilise this stretch: C31–C163, C50–C66, C98–C256, C142–C210, C174–C189, and C200–C225. N-linked (GlcNAc...) asparagine glycans are attached at residues N32 and N44. The active-site Charge relay system is the H65. N-linked (GlcNAc...) asparagine glycosylation is present at N103. The active-site Charge relay system is D110. The N-linked (GlcNAc...) asparagine glycan is linked to N121. An O-linked (GalNAc...) serine glycan is attached at S133. N154 and N170 each carry an N-linked (GlcNAc...) asparagine glycan. S204 functions as the Charge relay system in the catalytic mechanism. N-linked (GlcNAc...) asparagine glycosylation is found at N211 and N251. T255 carries an O-linked (GalNAc...) threonine glycan.

The protein belongs to the peptidase S1 family. Snake venom subfamily. Monomer. In terms of processing, N- and O-glycosylated. The glycosylation has a stabilizing effect on the protein. However, the removal of part of the carbohydrates enhances the proteolytic activity of the SVSP towards human and rat fibrinogen. As to expression, expressed by the venom gland.

It localises to the secreted. Inhibited by diisopropylfluorophosphate (DFP), but not by SBTI, Antithrombin III/heparin and BPTI, probably due to steric hindrance caused by its huge carbohydrate moietie. Snake venom serine protease that has a potent and selective fibrinogenolytic activity. Preferentially cleaves the alpha-chain (FGA) of human and rat fibrinogen at Arg-|-Gly bonds, and slowly digests the beta-chain (FGB). In vivo, completely avoids thrombus formation induced in rat, decreases the fibrinogen plasma level and prolonges the recalcification time. Possesses esterolytic and amidolytic activities. The chain is Snake venom serine protease BPA from Bothrops jararaca (Jararaca).